A 254-amino-acid polypeptide reads, in one-letter code: uncharacterized protein (254 aa).

The next 8 helical transmembrane spans lie at valine 41–isoleucine 61, isoleucine 64–phenylalanine 84, isoleucine 91–leucine 111, isoleucine 125–alanine 145, proline 146–phenylalanine 166, phenylalanine 172–leucine 192, methionine 204–proline 224, and isoleucine 232–leucine 252.

Belongs to the TatC family.

The protein resides in the plastid. It is found in the chloroplast membrane. This is an uncharacterized protein from Porphyra purpurea (Red seaweed).